The primary structure comprises 338 residues: tRNA N6-adenosine threonylcarbamoyltransferase (338 aa).

Fe cation-binding residues include His-110 and His-114. Substrate-binding positions include 132–136, Asp-165, Gly-178, and Asn-274; that span reads ILSGG. Asp-298 is a binding site for Fe cation.

This sequence belongs to the KAE1 / TsaD family. The cofactor is Fe(2+).

The protein localises to the cytoplasm. It catalyses the reaction L-threonylcarbamoyladenylate + adenosine(37) in tRNA = N(6)-L-threonylcarbamoyladenosine(37) in tRNA + AMP + H(+). In terms of biological role, required for the formation of a threonylcarbamoyl group on adenosine at position 37 (t(6)A37) in tRNAs that read codons beginning with adenine. Is involved in the transfer of the threonylcarbamoyl moiety of threonylcarbamoyl-AMP (TC-AMP) to the N6 group of A37, together with TsaE and TsaB. TsaD likely plays a direct catalytic role in this reaction. This is tRNA N6-adenosine threonylcarbamoyltransferase from Borrelia hermsii (strain HS1 / DAH).